We begin with the raw amino-acid sequence, 158 residues long: SsrA-binding protein (158 aa).

This sequence belongs to the SmpB family.

The protein localises to the cytoplasm. In terms of biological role, required for rescue of stalled ribosomes mediated by trans-translation. Binds to transfer-messenger RNA (tmRNA), required for stable association of tmRNA with ribosomes. tmRNA and SmpB together mimic tRNA shape, replacing the anticodon stem-loop with SmpB. tmRNA is encoded by the ssrA gene; the 2 termini fold to resemble tRNA(Ala) and it encodes a 'tag peptide', a short internal open reading frame. During trans-translation Ala-aminoacylated tmRNA acts like a tRNA, entering the A-site of stalled ribosomes, displacing the stalled mRNA. The ribosome then switches to translate the ORF on the tmRNA; the nascent peptide is terminated with the 'tag peptide' encoded by the tmRNA and targeted for degradation. The ribosome is freed to recommence translation, which seems to be the essential function of trans-translation. This chain is SsrA-binding protein, found in Glaesserella parasuis serovar 5 (strain SH0165) (Haemophilus parasuis).